A 765-amino-acid polypeptide reads, in one-letter code: Multifunctional tryptophan biosynthesis protein (765 aa).

The Glutamine amidotransferase type-1 domain maps to 2–196 (ATLLIDNYDS…LSLRGGNWDE (195 aa)). 53–55 (GPG) contributes to the L-glutamine binding site. Cys-81 serves as the catalytic Nucleophile; for GATase activity. L-glutamine is bound by residues Gln-85 and 131–132 (SL). Residues His-170 and Glu-172 each act as for GATase activity in the active site. Residues 231 to 494 (TILSRIYAQR…NLKEFVAELL (264 aa)) are indole-3-glycerol phosphate synthase. An N-(5'-phosphoribosyl)anthranilate isomerase region spans residues 512-765 (QVKICGISSV…VEKAKSINLQ (254 aa)).

It carries out the reaction N-(5-phospho-beta-D-ribosyl)anthranilate = 1-(2-carboxyphenylamino)-1-deoxy-D-ribulose 5-phosphate. The enzyme catalyses 1-(2-carboxyphenylamino)-1-deoxy-D-ribulose 5-phosphate + H(+) = (1S,2R)-1-C-(indol-3-yl)glycerol 3-phosphate + CO2 + H2O. It catalyses the reaction chorismate + L-glutamine = anthranilate + pyruvate + L-glutamate + H(+). The protein operates within amino-acid biosynthesis; L-tryptophan biosynthesis; L-tryptophan from chorismate: step 1/5. Its pathway is amino-acid biosynthesis; L-tryptophan biosynthesis; L-tryptophan from chorismate: step 3/5. It functions in the pathway amino-acid biosynthesis; L-tryptophan biosynthesis; L-tryptophan from chorismate: step 4/5. Its function is as follows. Trifunctional enzyme bearing the Gln amidotransferase (GATase) domain of anthranilate synthase, indole-glycerolphosphate synthase, and phosphoribosylanthranilate isomerase activities. This Phycomyces blakesleeanus protein is Multifunctional tryptophan biosynthesis protein (trp1).